Here is a 268-residue protein sequence, read N- to C-terminus: Tryptophan synthase alpha chain (268 aa).

Residues glutamate 49 and aspartate 60 each act as proton acceptor in the active site.

The protein belongs to the TrpA family. As to quaternary structure, tetramer of two alpha and two beta chains.

The catalysed reaction is (1S,2R)-1-C-(indol-3-yl)glycerol 3-phosphate + L-serine = D-glyceraldehyde 3-phosphate + L-tryptophan + H2O. The protein operates within amino-acid biosynthesis; L-tryptophan biosynthesis; L-tryptophan from chorismate: step 5/5. Its function is as follows. The alpha subunit is responsible for the aldol cleavage of indoleglycerol phosphate to indole and glyceraldehyde 3-phosphate. The protein is Tryptophan synthase alpha chain of Escherichia coli (strain ATCC 8739 / DSM 1576 / NBRC 3972 / NCIMB 8545 / WDCM 00012 / Crooks).